The chain runs to 301 residues: GPN-loop GTPase 3 (301 aa).

13-18 is a binding site for GTP; sequence GAGKST. Residues 70–72 carry the Gly-Pro-Asn (GPN)-loop; involved in dimer interface motif; that stretch reads GPN. Residue 176-179 coordinates GTP; sequence SKMD. Positions 212 to 232 are disordered; sequence IAEGQDAEDDESKAPDEKDQV. Over residues 223–232 the composition is skewed to basic and acidic residues; sequence SKAPDEKDQV.

This sequence belongs to the GPN-loop GTPase family. In terms of assembly, heterodimers with GPN1 or GPN2. Binds to RNA polymerase II (RNAPII).

Its function is as follows. Small GTPase required for proper nuclear import of RNA polymerase II and III (RNAPII and RNAPIII). May act at an RNAP assembly step prior to nuclear import. The polypeptide is GPN-loop GTPase 3 (Gibberella zeae (strain ATCC MYA-4620 / CBS 123657 / FGSC 9075 / NRRL 31084 / PH-1) (Wheat head blight fungus)).